Consider the following 468-residue polypeptide: Glutamine synthetase (468 aa).

A GS beta-grasp domain is found at 14–98; sequence HDVKYVDLRF…ILCDVYEPST (85 aa). The 363-residue stretch at 106–468 folds into the GS catalytic domain; the sequence is PRGIAKAAEK…PIEYKMYYSV (363 aa). Residues glutamate 131 and glutamate 133 each coordinate Mg(2+). Glutamate 209 serves as a coordination point for ATP. Positions 214 and 221 each coordinate Mg(2+). L-glutamate-binding positions include 265-266 and glycine 266; that span reads NG. A Mg(2+)-binding site is contributed by histidine 270. Residues 272 to 274 and serine 274 each bind ATP; that span reads HQS. 3 residues coordinate L-glutamate: arginine 322, glutamate 328, and arginine 340. Positions 340, 345, and 353 each coordinate ATP. Position 358 (glutamate 358) interacts with Mg(2+). Residue arginine 360 coordinates L-glutamate. The residue at position 398 (tyrosine 398) is an O-AMP-tyrosine.

This sequence belongs to the glutamine synthetase family. Oligomer of 12 subunits arranged in the form of two hexameric ring. It depends on Mg(2+) as a cofactor.

The protein resides in the cytoplasm. It catalyses the reaction L-glutamate + NH4(+) + ATP = L-glutamine + ADP + phosphate + H(+). The activity of this enzyme could be controlled by adenylation under conditions of abundant glutamine. In terms of biological role, catalyzes the ATP-dependent biosynthesis of glutamine from glutamate and ammonia. This is Glutamine synthetase from Azospirillum brasilense.